Consider the following 674-residue polypeptide: DNA ligase (674 aa).

NAD(+) contacts are provided by residues 34-38, 84-85, and Glu116; these read DAEYD and SL. The active-site N6-AMP-lysine intermediate is the Lys118. NAD(+) contacts are provided by Arg139, Glu174, Lys291, and Lys315. Zn(2+) is bound by residues Cys409, Cys412, Cys425, and Cys430. Residues 586–674 enclose the BRCT domain; sequence RGEEALKGLT…TGKPVETLAS (89 aa).

The protein belongs to the NAD-dependent DNA ligase family. LigA subfamily. Mg(2+) is required as a cofactor. Mn(2+) serves as cofactor.

It catalyses the reaction NAD(+) + (deoxyribonucleotide)n-3'-hydroxyl + 5'-phospho-(deoxyribonucleotide)m = (deoxyribonucleotide)n+m + AMP + beta-nicotinamide D-nucleotide.. Functionally, DNA ligase that catalyzes the formation of phosphodiester linkages between 5'-phosphoryl and 3'-hydroxyl groups in double-stranded DNA using NAD as a coenzyme and as the energy source for the reaction. It is essential for DNA replication and repair of damaged DNA. This is DNA ligase from Thermus scotoductus.